The sequence spans 61 residues: Sec-independent protein translocase protein TatA (61 aa).

A helical membrane pass occupies residues 2 to 22; the sequence is GLSGISPLSLLLILAIIVALF.

This sequence belongs to the TatA/E family. In terms of assembly, the Tat system comprises two distinct complexes: a TatABC complex, containing multiple copies of TatA, TatB and TatC subunits, and a separate TatA complex, containing only TatA subunits. Substrates initially bind to the TatABC complex, which probably triggers association of the separate TatA complex to form the active translocon.

It localises to the cell inner membrane. Functionally, part of the twin-arginine translocation (Tat) system that transports large folded proteins containing a characteristic twin-arginine motif in their signal peptide across membranes. TatA could form the protein-conducting channel of the Tat system. This Legionella pneumophila (strain Corby) protein is Sec-independent protein translocase protein TatA.